A 487-amino-acid chain; its full sequence is b(0,+)-type amino acid transporter 1 (487 aa).

The interval 1–20 is disordered; the sequence is MEETSLRRRREDEKSTHSTE. Residues 1-31 are Cytoplasmic-facing; sequence MEETSLRRRREDEKSTHSTELKTTSLQKEVG. Ser18 carries the post-translational modification Phosphoserine. A helical transmembrane segment spans residues 32 to 55; that stretch reads LLSGICIIVGTIIGSGIFISPKSV. 43 to 47 serves as a coordination point for L-arginine; the sequence is IIGSG. Over 56–62 the chain is Extracellular; the sequence is LANTESV. The chain crosses the membrane as a helical span at residues 63–84; the sequence is GPCLIIWAACGILATLGALCFA. Topologically, residues 85-110 are cytoplasmic; the sequence is ELGTMITKSGGEYPYLMEAFGPIPAY. A helical membrane pass occupies residues 111–137; the sequence is LFSWTSLIVMKPSSFAIICLSFSEYVC. Residues 138–147 lie on the Extracellular side of the membrane; it reads AAFYSGCKPP. The next 2 membrane-spanning stretches (helical) occupy residues 148–169 and 170–193; these read AVVV…NALS and VRLG…IIII. The Extracellular segment spans residues 194-217; it reads SGLVFLAQGNVKNFQNSFEGTQTS. Residues 218 to 238 traverse the membrane as a helical segment; it reads VGAISLAFYNGLWAYDGWNQL. Residue Asp233 coordinates L-arginine. Over 239 to 251 the chain is Cytoplasmic; it reads NYITEELRNPYRN. A helical membrane pass occupies residues 252 to 274; it reads LPMAIVIGIPLVTVCYILMNIAY. The Extracellular segment spans residues 275–302; sequence FTVMTPTELLQSQAVAVTFGDRVLYPAS. A helical membrane pass occupies residues 303 to 325; that stretch reads WVVPLFVAFSTIGAANGTCFTAG. The Cytoplasmic segment spans residues 326–351; sequence RLIYVAGREGHMLKVLSYISVKRLTP. A run of 2 helical transmembrane segments spans residues 352–370 and 371–391; these read APAL…IPGD and INSL…MTIL. Topologically, residues 392–410 are cytoplasmic; the sequence is GLVVMRFTRKDLERPIKVP. Residues 411–431 traverse the membrane as a helical segment; the sequence is LFIPIIVILVSLFLILAPIIS. Residues 432–434 are Extracellular-facing; that stretch reads EPA. A helical membrane pass occupies residues 435–450; the sequence is WEYLYCVLFILSGLIF. Residues 451–487 lie on the Cytoplasmic side of the membrane; that stretch reads YFLFVYYKFGWAQRISRPVTKHLQMLMEVVPPEKDPE.

The protein belongs to the amino acid-polyamine-organocation (APC) superfamily. Disulfide-linked heterodimer composed of the catalytic light chain subunit SLC7A9 and the heavy chain subunit SLC3A1. The heterodimer is the minimal functional unit. Assembles in heterotetramers (dimers of heterodimers) and higher order oligomers; the oligomerization is mediated by SLC3A1 likely to prevent degradation and facilitate heteromer trafficking to the plasma membrane. Interacts with CAV1. In terms of tissue distribution, expressed in the brush border membrane in the kidney (at protein level).

The protein localises to the apical cell membrane. It carries out the reaction L-leucine(out) + L-arginine(in) = L-leucine(in) + L-arginine(out). The catalysed reaction is L-histidine(out) + L-arginine(in) = L-histidine(in) + L-arginine(out). The enzyme catalyses L-arginine(in) + L-phenylalanine(out) = L-arginine(out) + L-phenylalanine(in). It catalyses the reaction L-cysteine(out) + L-arginine(in) = L-cysteine(in) + L-arginine(out). It carries out the reaction L-cystine(out) + L-arginine(in) = L-cystine(in) + L-arginine(out). The catalysed reaction is L-lysine(out) + L-arginine(in) = L-lysine(in) + L-arginine(out). Functionally, associates with SLC3A1 to form a functional transporter complex that mediates the electrogenic exchange between cationic amino acids and neutral amino acids, with a stoichiometry of 1:1. Has system b(0,+)-like activity with high affinity for extracellular cationic amino acids and L-cystine and lower affinity for intracellular neutral amino acids. Substrate exchange is driven by high concentration of intracellular neutral amino acids and the intracellular reduction of L-cystine to L-cysteine. Required for reabsorption of L-cystine and dibasic amino acids across the brush border membrane in renal proximal tubules. The protein is b(0,+)-type amino acid transporter 1 (Slc7a9) of Mus musculus (Mouse).